Reading from the N-terminus, the 239-residue chain is Peptidyl-tRNA hydrolase (239 aa).

Tyrosine 14 contributes to the tRNA binding site. The active-site Proton acceptor is the histidine 19. TRNA is bound by residues phenylalanine 64, asparagine 66, and asparagine 112. Residues 199–227 (EKPAQKGRSHIRQARPKAPPAELPSSGPM) are disordered. Basic residues predominate over residues 203-213 (QKGRSHIRQAR).

The protein belongs to the PTH family. As to quaternary structure, monomer.

Its subcellular location is the cytoplasm. The catalysed reaction is an N-acyl-L-alpha-aminoacyl-tRNA + H2O = an N-acyl-L-amino acid + a tRNA + H(+). In terms of biological role, hydrolyzes ribosome-free peptidyl-tRNAs (with 1 or more amino acids incorporated), which drop off the ribosome during protein synthesis, or as a result of ribosome stalling. Its function is as follows. Catalyzes the release of premature peptidyl moieties from peptidyl-tRNA molecules trapped in stalled 50S ribosomal subunits, and thus maintains levels of free tRNAs and 50S ribosomes. This chain is Peptidyl-tRNA hydrolase, found in Chelativorans sp. (strain BNC1).